Consider the following 130-residue polypeptide: Small ribosomal subunit protein uS11 (130 aa).

It belongs to the universal ribosomal protein uS11 family. Part of the 30S ribosomal subunit. Interacts with proteins S7 and S18. Binds to IF-3.

Located on the platform of the 30S subunit, it bridges several disparate RNA helices of the 16S rRNA. Forms part of the Shine-Dalgarno cleft in the 70S ribosome. The sequence is that of Small ribosomal subunit protein uS11 from Shewanella halifaxensis (strain HAW-EB4).